The primary structure comprises 78 residues: Large ribosomal subunit protein bL28 (78 aa).

It belongs to the bacterial ribosomal protein bL28 family.

This chain is Large ribosomal subunit protein bL28, found in Prochlorococcus marinus (strain MIT 9215).